Reading from the N-terminus, the 465-residue chain is Argininosuccinate lyase (465 aa).

Belongs to the lyase 1 family. Argininosuccinate lyase subfamily.

The protein localises to the cytoplasm. It catalyses the reaction 2-(N(omega)-L-arginino)succinate = fumarate + L-arginine. Its pathway is amino-acid biosynthesis; L-arginine biosynthesis; L-arginine from L-ornithine and carbamoyl phosphate: step 3/3. The protein is Argininosuccinate lyase of Nitrobacter winogradskyi (strain ATCC 25391 / DSM 10237 / CIP 104748 / NCIMB 11846 / Nb-255).